Consider the following 240-residue polypeptide: Histidinol dehydrogenase homolog oryD (240 aa).

Residues Gln64 and His67 each coordinate Zn(2+). Glu134 serves as the catalytic Proton acceptor. Zn(2+) is bound by residues Asp168 and His228.

The protein belongs to the histidinol dehydrogenase family. It depends on Zn(2+) as a cofactor.

It participates in secondary metabolite biosynthesis. Functionally, histidinol dehydrogenase homolog; part of the gene cluster that mediates the biosynthesis of oryzines, natural products with an unusual maleidride backbone. The two subunits of the fungal fatty acid synthase oryfasA and oryfasB probably form octenoic acid. This fatty acid is most likely activated by the acyl-CoA ligase oryP to give octenyl-CoA before the citrate synthase-like protein oryE catalyzes condensation with oxaloacetate to form tricarboxylic acid. The next steps of the pathways are conjectural, but a favorite possible route has been proposed, beginning with decarboxylation and concomitant dehydration by the decarboxylase oryM, followed by tautomerization, which may lead to the production of a diene intermediate. Reduction of this diene intermediate could give the known metabolite piliformic acid. On the pathway to oryzine B and oryzine A, however, hydroxylation of the diene by the alpha-ketoglutarate-dependent dioxygenase oryG and lactonisation by the lactonohydrolases oryH or oryL could give oryzine B directly. Finally, enoyl reduction by the dehydrogenase oryD would then convert oryzine B into oryzine A. This chain is Histidinol dehydrogenase homolog oryD, found in Aspergillus oryzae (strain ATCC 42149 / RIB 40) (Yellow koji mold).